Reading from the N-terminus, the 146-residue chain is D-aminoacyl-tRNA deacylase (146 aa).

Residues 137–138 (GP) carry the Gly-cisPro motif, important for rejection of L-amino acids motif.

It belongs to the DTD family. Homodimer.

The protein resides in the cytoplasm. The enzyme catalyses glycyl-tRNA(Ala) + H2O = tRNA(Ala) + glycine + H(+). The catalysed reaction is a D-aminoacyl-tRNA + H2O = a tRNA + a D-alpha-amino acid + H(+). In terms of biological role, an aminoacyl-tRNA editing enzyme that deacylates mischarged D-aminoacyl-tRNAs. Also deacylates mischarged glycyl-tRNA(Ala), protecting cells against glycine mischarging by AlaRS. Acts via tRNA-based rather than protein-based catalysis; rejects L-amino acids rather than detecting D-amino acids in the active site. By recycling D-aminoacyl-tRNA to D-amino acids and free tRNA molecules, this enzyme counteracts the toxicity associated with the formation of D-aminoacyl-tRNA entities in vivo and helps enforce protein L-homochirality. The sequence is that of D-aminoacyl-tRNA deacylase from Deinococcus deserti (strain DSM 17065 / CIP 109153 / LMG 22923 / VCD115).